The sequence spans 168 residues: 3-hydroxyacyl-[acyl-carrier-protein] dehydratase FabZ (168 aa).

Residue His-54 is part of the active site.

This sequence belongs to the thioester dehydratase family. FabZ subfamily.

Its subcellular location is the cytoplasm. It catalyses the reaction a (3R)-hydroxyacyl-[ACP] = a (2E)-enoyl-[ACP] + H2O. Its function is as follows. Involved in unsaturated fatty acids biosynthesis. Catalyzes the dehydration of short chain beta-hydroxyacyl-ACPs and long chain saturated and unsaturated beta-hydroxyacyl-ACPs. The sequence is that of 3-hydroxyacyl-[acyl-carrier-protein] dehydratase FabZ from Yersinia enterocolitica serotype O:8 / biotype 1B (strain NCTC 13174 / 8081).